A 106-amino-acid chain; its full sequence is COX assembly mitochondrial protein homolog (106 aa).

N-acetylalanine is present on Ala-2. One can recognise a CHCH domain in the interval 28-71 (RERCSEQVQDFTKCCKDSGVLMVVKCRKENSALKDCLTSYYKDP). Short sequence motifs (cx9C motif) lie at residues 31 to 41 (CSEQVQDFTKC) and 53 to 63 (CRKENSALKDC). 2 cysteine pairs are disulfide-bonded: Cys-31-Cys-63 and Cys-41-Cys-53.

This sequence belongs to the CMC family. Component of the MITRAC (mitochondrial translation regulation assembly intermediate of cytochrome c oxidase complex) complex, the core components of this complex being COA3/MITRAC12 and COX14.

Its subcellular location is the mitochondrion. Functionally, component of the MITRAC (mitochondrial translation regulation assembly intermediate of cytochrome c oxidase complex) complex, that regulates cytochrome c oxidase assembly. The sequence is that of COX assembly mitochondrial protein homolog (CMC1) from Bos taurus (Bovine).